Reading from the N-terminus, the 88-residue chain is Small ribosomal subunit protein bS20 (88 aa).

This sequence belongs to the bacterial ribosomal protein bS20 family.

Binds directly to 16S ribosomal RNA. The polypeptide is Small ribosomal subunit protein bS20 (Mycoplasmopsis synoviae (strain 53) (Mycoplasma synoviae)).